The primary structure comprises 397 residues: Ubiquitin-like modifier-activating enzyme 5 (397 aa).

ATP is bound by residues Gly76, Asp97, Lys120, Asn143, and Asn177. 2 residues coordinate Zn(2+): Cys219 and Cys222. The active-site Glycyl thioester intermediate is Cys243. Cys296 and Cys301 together coordinate Zn(2+). Residues 343 to 384 are disordered; it reads PSDAPTDLSQSTDVGQGLRLAYEAPEKSSAEATQAATAPVDD.

It belongs to the ubiquitin-activating E1 family. UBA5 subfamily.

E1-like enzyme which activates UFM1. This chain is Ubiquitin-like modifier-activating enzyme 5, found in Drosophila pseudoobscura pseudoobscura (Fruit fly).